Reading from the N-terminus, the 290-residue chain is Type II secretion system protein C (290 aa).

Residues 1–28 (MTLPFRNDLLSSLLARCKTVPLSRFSQP) lie on the Cytoplasmic side of the membrane. A helical transmembrane segment spans residues 29 to 46 (LFWLLLLLLAHQCAGLTW). Over 47–290 (RLLDLGSQQA…LYDVYVGLSE (244 aa)) the chain is Periplasmic.

The protein belongs to the GSP C family.

The protein localises to the cell inner membrane. Involved in a type II secretion system (T2SS, formerly general secretion pathway, GSP) for the export of proteins. The protein is Type II secretion system protein C (exeC) of Aeromonas hydrophila.